Here is a 388-residue protein sequence, read N- to C-terminus: Glucose-1-phosphate adenylyltransferase (388 aa).

Alpha-D-glucose 1-phosphate contacts are provided by residues tyrosine 100, glycine 165, glutamate 180–lysine 181, and serine 191.

Belongs to the bacterial/plant glucose-1-phosphate adenylyltransferase family. Homotetramer.

It carries out the reaction alpha-D-glucose 1-phosphate + ATP + H(+) = ADP-alpha-D-glucose + diphosphate. It functions in the pathway glycan biosynthesis; glycogen biosynthesis. Functionally, involved in the biosynthesis of ADP-glucose, a building block required for the elongation reactions to produce glycogen. Catalyzes the reaction between ATP and alpha-D-glucose 1-phosphate (G1P) to produce pyrophosphate and ADP-Glc. The protein is Glucose-1-phosphate adenylyltransferase of Clostridium perfringens (strain SM101 / Type A).